The primary structure comprises 590 residues: MASLREATLRKLRRFSELRGKPVAAGEFWDVVAITAADEKQELAYKQQLSEKLKKRELPLGVQYHVFPDPAGTKIGNGGSTLCSLECLESLCGDKWNSLKVLLIHSGGYSQRLPNASALGKIFTALPLGEPIYQMLELKLAMYVDFPSNMRPGVLVTCADDIELYSVGDSEYIAFDQPGFTALAHPSSLAVGTTHGVFVLHSDSSLQHGDLEYRQCYQFLHKPTIENMHRFNAVHRQRSFGQQNLSGGDTDCLPLHTEYVYTDSLFYMDHKSAKKLLDFYKSEGPLNCEIDAYGDFLQALGPGATAEYTRNTSHVTKEESQLLDMRQKIFHLLKGTPLNVVVLNNSRFYHIGTLQEYLLHFTSDSALKTELGLQSIAFSVSPSVPERSSGTACVIHSIVDSGCCVAPGSVVEYSRLGPEVSIGENCIISSSVIAKTVVPAYSFLCSLSVKINGHLKYSTMVFGMQDNLKNSVKTLEDIKALQFFGVCFLSCLDIWNLKATEKLFSGNKMNLSLWTACIFPVCSSLSESATASLGMLSAVRNHSPFNLSDFNLLSIQEMLVYKDVQDMLAYREHIFLEISSNKNQSDLEKS.

In terms of tissue distribution, expressed at highest levels in brain, moderately in testis, ovary and kidney, and weakly in liver, spleen, heart and lung.

Its subcellular location is the cytoplasm. It carries out the reaction beta-L-fucose 1-phosphate + GTP + H(+) = GDP-beta-L-fucose + diphosphate. In terms of biological role, catalyzes the formation of GDP-L-fucose from GTP and L-fucose-1-phosphate. Functions as a salvage pathway to reutilize L-fucose arising from the turnover of glycoproteins and glycolipids. The chain is Fucose-1-phosphate guanylyltransferase from Mus musculus (Mouse).